Reading from the N-terminus, the 617-residue chain is Protelomerase (617 aa).

Residues R270, K295, R376, and H409 each coordinate DNA. Y418 serves as the catalytic Nucleophile. The span at 535–562 shows a compositional bias: acidic residues; that stretch reads DAEEDEIEEDFTDEEIDDTEFDVSDNAS. The disordered stretch occupies residues 535 to 575; that stretch reads DAEEDEIEEDFTDEEIDDTEFDVSDNASDEDKPEDKPRFAA. Basic and acidic residues predominate over residues 563–575; it reads DEDKPEDKPRFAA.

The protein belongs to the Caudoviricetes Protelomerase family. As to quaternary structure, monomer. Homodimer; in presence of DNA.

Functionally, converts the circular intermediates produced by the viral replication and carrying a joined telomere site to a linear DNA molecule with covalently closed hairpin ends. The viral circular DNA is cleaved at a palindromic site called telRL thereby generating a linear prophage plasmid with telomeres. Binds covalently to the 3'-phosphoryl of the cleaved strands. The protein is Protelomerase (tel) of Yersinia enterocolitica (Bacteriophage PY54).